We begin with the raw amino-acid sequence, 217 residues long: Nucleolar protein 12 (217 aa).

The stretch at Gly-34 to Gln-98 forms a coiled coil. A disordered region spans residues Leu-122–Glu-217. A compositionally biased stretch (acidic residues) spans Gly-130–Ser-141. Basic residues-rich tracts occupy residues Ala-172–Arg-184 and Lys-201–Glu-217.

This sequence belongs to the RRP17 family. Interacts with KIAA1191. As to expression, expressed in brain, lung, spleen, kidney and heart.

It localises to the nucleus. Its subcellular location is the nucleolus. It is found in the cytoplasm. In terms of biological role, multifunctional RNA binding protein that plays a role in RNA metabolism and DNA maintenance. Participates in the resolution of DNA stress and the maintenance of genome integrity by localizing to sites of DNA insults. Also plays a role in proper nucleolar organization by limiting nucleolar size and regulating nucleolar number. Mechanistically, regulates the nucleolar levels of fibrillarin and nucleolin, two key players in pre-rRNA processing and ribosome assembly. The sequence is that of Nucleolar protein 12 (Nol12) from Mus musculus (Mouse).